We begin with the raw amino-acid sequence, 345 residues long: Ferrochelatase (345 aa).

H215 and E296 together coordinate Fe cation.

The protein belongs to the ferrochelatase family.

The protein resides in the cytoplasm. The catalysed reaction is heme b + 2 H(+) = protoporphyrin IX + Fe(2+). The protein operates within porphyrin-containing compound metabolism; protoheme biosynthesis; protoheme from protoporphyrin-IX: step 1/1. In terms of biological role, catalyzes the ferrous insertion into protoporphyrin IX. The protein is Ferrochelatase of Rhodopseudomonas palustris (strain ATCC BAA-98 / CGA009).